A 61-amino-acid polypeptide reads, in one-letter code: Large ribosomal subunit protein uL30 (61 aa).

Belongs to the universal ribosomal protein uL30 family. Part of the 50S ribosomal subunit.

This chain is Large ribosomal subunit protein uL30, found in Bordetella petrii (strain ATCC BAA-461 / DSM 12804 / CCUG 43448).